A 457-amino-acid polypeptide reads, in one-letter code: Angiopoietin-related protein 6 (457 aa).

A signal peptide spans 1–24; it reads MGTARLRKLQLLLLLGAWRALGGA. 2 coiled-coil regions span residues 51-77 and 126-164; these read DSEL…RAAE and LLAE…QHSS. The tract at residues 201–235 is disordered; sequence SNTSRRLDQTPEHQREQSLRQQGPPSSLLPTGHLA. Asn202 is a glycosylation site (N-linked (GlcNAc...) asparagine). Residues 205–218 are compositionally biased toward basic and acidic residues; it reads RRLDQTPEHQREQS. A compositionally biased stretch (polar residues) spans 219–229; the sequence is LRQQGPPSSLL. A Fibrinogen C-terminal domain is found at 238-456; the sequence is TRPVGPWRDC…KAVMLTRLVR (219 aa). Intrachain disulfides connect Cys247–Cys274 and Cys397–Cys410.

In terms of tissue distribution, highly expressed in the liver, specifically in hepatocytes, and weakly in the heart. Expressed in hematopoietic cells, platelets and mast cells, and detected at wounded skin.

Its subcellular location is the secreted. In terms of biological role, may play a role in the wound healing process. May promote epidermal proliferation, remodeling and regeneration. May promote the chemotactic activity of endothelial cells and induce neovascularization. May counteract high-fat diet-induced obesity and related insulin resistance through increased energy expenditure. The protein is Angiopoietin-related protein 6 (Angptl6) of Mus musculus (Mouse).